Reading from the N-terminus, the 194-residue chain is 7-methyl-GTP pyrophosphatase (194 aa).

The active-site Proton acceptor is the Asp71.

Belongs to the Maf family. YceF subfamily. A divalent metal cation serves as cofactor.

The protein resides in the cytoplasm. The enzyme catalyses N(7)-methyl-GTP + H2O = N(7)-methyl-GMP + diphosphate + H(+). Its function is as follows. Nucleoside triphosphate pyrophosphatase that hydrolyzes 7-methyl-GTP (m(7)GTP). May have a dual role in cell division arrest and in preventing the incorporation of modified nucleotides into cellular nucleic acids. The protein is 7-methyl-GTP pyrophosphatase of Aromatoleum aromaticum (strain DSM 19018 / LMG 30748 / EbN1) (Azoarcus sp. (strain EbN1)).